The following is a 501-amino-acid chain: Aldehyde dehydrogenase 1A1 (501 aa).

The residue at position 2 (Ser2) is an N-acetylserine. 2 positions are modified to N6-acetyllysine: Lys91 and Lys128. Residues 167 to 170 (IPWN), 193 to 196 (KPAE), 226 to 227 (GP), and 246 to 247 (GS) each bind NAD(+). An N6-acetyllysine modification is found at Lys252. Glu269 functions as the Proton acceptor in the catalytic mechanism. An NAD(+)-binding site is contributed by 269–271 (ELG). The active-site Nucleophile is the Cys303. The mediates interaction with PRMT3 stretch occupies residues 336–501 (LNSGINQGPQ…VAIKISQKNS (166 aa)). 349–353 (EQHDK) contributes to the NAD(+) binding site. N6-acetyllysine occurs at positions 353 and 367. Position 400–402 (400–402 (EIF)) interacts with NAD(+). The residue at position 410 (Lys410) is an N6-acetyllysine. Position 413 is a phosphoserine (Ser413). An N6-acetyllysine mark is found at Lys419, Lys435, and Lys495.

Belongs to the aldehyde dehydrogenase family. As to quaternary structure, homotetramer. Interacts with PRMT3; the interaction is direct, inhibits ALDH1A1 aldehyde dehydrogenase activity and is independent of the methyltransferase activity of PRMT3. Post-translationally, the N-terminus is blocked most probably by acetylation.

The protein resides in the cytoplasm. It is found in the cytosol. Its subcellular location is the cell projection. The protein localises to the axon. The enzyme catalyses an aldehyde + NAD(+) + H2O = a carboxylate + NADH + 2 H(+). It carries out the reaction all-trans-retinal + NAD(+) + H2O = all-trans-retinoate + NADH + 2 H(+). The catalysed reaction is 9-cis-retinal + NAD(+) + H2O = 9-cis-retinoate + NADH + 2 H(+). It catalyses the reaction 11-cis-retinal + NAD(+) + H2O = 11-cis-retinoate + NADH + 2 H(+). The enzyme catalyses 13-cis-retinal + NAD(+) + H2O = 13-cis-retinoate + NADH + 2 H(+). It carries out the reaction 3-deoxyglucosone + NAD(+) + H2O = 2-dehydro-3-deoxy-D-gluconate + NADH + 2 H(+). The catalysed reaction is (E)-4-hydroxynon-2-enal + NAD(+) + H2O = (E)-4-hydroxynon-2-enoate + NADH + 2 H(+). It catalyses the reaction malonaldehyde + NAD(+) + H2O = 3-oxopropanoate + NADH + 2 H(+). The enzyme catalyses hexanal + NAD(+) + H2O = hexanoate + NADH + 2 H(+). It carries out the reaction propanal + NAD(+) + H2O = propanoate + NADH + 2 H(+). The catalysed reaction is acetaldehyde + NAD(+) + H2O = acetate + NADH + 2 H(+). It catalyses the reaction benzaldehyde + NAD(+) + H2O = benzoate + NADH + 2 H(+). The enzyme catalyses 4-aminobutanal + NAD(+) + H2O = 4-aminobutanoate + NADH + 2 H(+). Its pathway is cofactor metabolism; retinol metabolism. In terms of biological role, cytosolic dehydrogenase that catalyzes the irreversible oxidation of a wide range of aldehydes to their corresponding carboxylic acid. Functions downstream of retinol dehydrogenases and catalyzes the oxidation of retinaldehyde into retinoic acid, the second step in the oxidation of retinol/vitamin A into retinoic acid. This pathway is crucial to control the levels of retinol and retinoic acid, two important molecules which excess can be teratogenic and cytotoxic. Also oxidizes aldehydes resulting from lipid peroxidation like (E)-4-hydroxynon-2-enal/HNE, malonaldehyde and hexanal that form protein adducts and are highly cytotoxic. By participating for instance to the clearance of (E)-4-hydroxynon-2-enal/HNE in the lens epithelium prevents the formation of HNE-protein adducts and lens opacification. Also functions downstream of fructosamine-3-kinase in the fructosamine degradation pathway by catalyzing the oxidation of 3-deoxyglucosone, the carbohydrate product of fructosamine 3-phosphate decomposition, which is itself a potent glycating agent that may react with lysine and arginine side-chains of proteins. Also has an aminobutyraldehyde dehydrogenase activity and is probably part of an alternative pathway for the biosynthesis of GABA/4-aminobutanoate in midbrain, thereby playing a role in GABAergic synaptic transmission. This is Aldehyde dehydrogenase 1A1 from Mesocricetus auratus (Golden hamster).